Reading from the N-terminus, the 357-residue chain is Biotin synthase (357 aa).

A Radical SAM core domain is found at 41–268; it reads NEVQISRLLS…KSRVRLSAGR (228 aa). 3 residues coordinate [4Fe-4S] cluster: C56, C60, and C63. Residues C100, C131, C191, and R263 each coordinate [2Fe-2S] cluster.

It belongs to the radical SAM superfamily. Biotin synthase family. In terms of assembly, homodimer. Requires [4Fe-4S] cluster as cofactor. [2Fe-2S] cluster serves as cofactor.

It carries out the reaction (4R,5S)-dethiobiotin + (sulfur carrier)-SH + 2 reduced [2Fe-2S]-[ferredoxin] + 2 S-adenosyl-L-methionine = (sulfur carrier)-H + biotin + 2 5'-deoxyadenosine + 2 L-methionine + 2 oxidized [2Fe-2S]-[ferredoxin]. The protein operates within cofactor biosynthesis; biotin biosynthesis; biotin from 7,8-diaminononanoate: step 2/2. Catalyzes the conversion of dethiobiotin (DTB) to biotin by the insertion of a sulfur atom into dethiobiotin via a radical-based mechanism. In Shewanella denitrificans (strain OS217 / ATCC BAA-1090 / DSM 15013), this protein is Biotin synthase.